The chain runs to 332 residues: Holliday junction branch migration complex subunit RuvB (332 aa).

A large ATPase domain (RuvB-L) region spans residues 1–181 (MSRILDNEMM…FGITGHMEYY (181 aa)). Residues Leu-20, Arg-21, Gly-62, Lys-65, Thr-66, Thr-67, 128-130 (EDF), Arg-171, Tyr-181, and Arg-218 each bind ATP. Thr-66 is a binding site for Mg(2+). The segment at 182 to 252 (AHADLTEIVE…ITDKALTMLD (71 aa)) is small ATPAse domain (RuvB-S). Residues 255-332 (HEGLDYVDQK…EHLGYEYSEK (78 aa)) are head domain (RuvB-H). Residues Arg-291, Arg-310, Arg-312, and Arg-315 each contribute to the DNA site.

It belongs to the RuvB family. In terms of assembly, homohexamer. Forms an RuvA(8)-RuvB(12)-Holliday junction (HJ) complex. HJ DNA is sandwiched between 2 RuvA tetramers; dsDNA enters through RuvA and exits via RuvB. An RuvB hexamer assembles on each DNA strand where it exits the tetramer. Each RuvB hexamer is contacted by two RuvA subunits (via domain III) on 2 adjacent RuvB subunits; this complex drives branch migration. In the full resolvosome a probable DNA-RuvA(4)-RuvB(12)-RuvC(2) complex forms which resolves the HJ.

The protein localises to the cytoplasm. It catalyses the reaction ATP + H2O = ADP + phosphate + H(+). The RuvA-RuvB-RuvC complex processes Holliday junction (HJ) DNA during genetic recombination and DNA repair, while the RuvA-RuvB complex plays an important role in the rescue of blocked DNA replication forks via replication fork reversal (RFR). RuvA specifically binds to HJ cruciform DNA, conferring on it an open structure. The RuvB hexamer acts as an ATP-dependent pump, pulling dsDNA into and through the RuvAB complex. RuvB forms 2 homohexamers on either side of HJ DNA bound by 1 or 2 RuvA tetramers; 4 subunits per hexamer contact DNA at a time. Coordinated motions by a converter formed by DNA-disengaged RuvB subunits stimulates ATP hydrolysis and nucleotide exchange. Immobilization of the converter enables RuvB to convert the ATP-contained energy into a lever motion, pulling 2 nucleotides of DNA out of the RuvA tetramer per ATP hydrolyzed, thus driving DNA branch migration. The RuvB motors rotate together with the DNA substrate, which together with the progressing nucleotide cycle form the mechanistic basis for DNA recombination by continuous HJ branch migration. Branch migration allows RuvC to scan DNA until it finds its consensus sequence, where it cleaves and resolves cruciform DNA. The protein is Holliday junction branch migration complex subunit RuvB of Streptococcus pneumoniae serotype 19F (strain G54).